We begin with the raw amino-acid sequence, 307 residues long: Porphobilinogen deaminase (307 aa).

At C239 the chain carries S-(dipyrrolylmethanemethyl)cysteine.

Belongs to the HMBS family. In terms of assembly, monomer. Dipyrromethane is required as a cofactor.

It catalyses the reaction 4 porphobilinogen + H2O = hydroxymethylbilane + 4 NH4(+). It functions in the pathway porphyrin-containing compound metabolism; protoporphyrin-IX biosynthesis; coproporphyrinogen-III from 5-aminolevulinate: step 2/4. In terms of biological role, tetrapolymerization of the monopyrrole PBG into the hydroxymethylbilane pre-uroporphyrinogen in several discrete steps. The chain is Porphobilinogen deaminase (hemC) from Campylobacter jejuni subsp. jejuni serotype O:2 (strain ATCC 700819 / NCTC 11168).